A 335-amino-acid chain; its full sequence is MSNDHLETTGSSDPNTNLLKYLPIVLNPDRTITRPIQIPSTAASPDPTSSSPVLTKDLALNPLHNTFVRLFLPRHALYNSAKLPLVVYFHGGGFILFSAASTIFHDFCCEMAVHAGVVIASVDYRLAPEHRLPAAYDDAMEALQWIKDSRDEWLTNFADFSNCFIMGESAGGNIAYHAGLRAAAVADELLPLKIKGLVLDEPGFGGSKRTGSELRLANDSRLPTFVLDLIWELSLPMGADRDHEYCNPTAESEPLYSFDKIRSLGWRVMVVGCHGDPMIDRQMELAERLEKKGVDVVAQFDVGGYHAVKLEDPEKAKQFFVILKKFVVDSCTTKL.

Residues 90-92 (HGG) carry the Involved in the stabilization of the negatively charged intermediate by the formation of the oxyanion hole motif. Residues 92–93 (GG), Ser169, and Ala170 contribute to the paraoxon site. Ser169 is a catalytic residue. Residues Asp276 and His306 contribute to the active site.

Belongs to the 'GDXG' lipolytic enzyme family.

The catalysed reaction is a carboxylic ester + H2O = an alcohol + a carboxylate + H(+). Its activity is regulated as follows. Is inhibited by the organophosphates paraoxon and dimethylchlorophosphate (DMCP). Its function is as follows. Carboxylesterase acting on esters with varying acyl chain length. In Actinidia eriantha (Velvet vine), this protein is Carboxylesterase 1 (CXE1).